The chain runs to 291 residues: Protein US2 (291 aa).

Glycine 2 bears the N-acetylglycine; by host mark. Residues 223 to 281 (NKPRPASSRPHPATHPTQRPCFTCMGRPEIPDEPSWQTGDDDPQNPGPPLAVGDEWPPS) are disordered.

This sequence belongs to the herpesviridae HHV-1 US2 protein family. As to quaternary structure, interacts with host KRT18. Interacts with host MAP3K7; this interaction induces host NF-kappa-B pathway.

The protein resides in the virion. It localises to the host cytoplasm. The protein localises to the host cell surface. Its subcellular location is the host nucleus. Its function is as follows. Plays a role in the activation of the host NF-kappa-B pathway by interacting with and thus activating the component MAP3K7. In Human herpesvirus 2 (strain HG52) (HHV-2), this protein is Protein US2.